The primary structure comprises 581 residues: Guanine nucleotide-binding protein-like 3 homolog (581 aa).

Residues 1–49 (MALKRLKTKKSKRLTGRLKHKIEKKVRDHNKKERRAAKKNPKKGSKKQK) are compositionally biased toward basic residues. Residues 1–50 (MALKRLKTKKSKRLTGRLKHKIEKKVRDHNKKERRAAKKNPKKGSKKQKL) form a disordered region. Residues 64–108 (LKEVEEAKQRQEAERLARREAFKAEREQNKFKTLESMVEDADMRS) are a coiled coil. A Phosphoserine modification is found at Ser-99. The 185-residue stretch at 141-325 (FKEFRKVIEN…LIDCPGIVFT (185 aa)) folds into the CP-type G domain. GTP is bound by residues 189 to 192 (NKAD), 274 to 281 (GIPNVGKS), and 318 to 321 (DCPG). Over residues 500–517 (KPAKGRKRKLDEEKEKVD) the composition is skewed to basic and acidic residues. Residues 500–519 (KPAKGRKRKLDEEKEKVDPS) are disordered.

This sequence belongs to the TRAFAC class YlqF/YawG GTPase family.

Its subcellular location is the nucleus. It is found in the nucleolus. In terms of biological role, may play a role in regulating cellular proliferation. This Drosophila melanogaster (Fruit fly) protein is Guanine nucleotide-binding protein-like 3 homolog (Ns1).